Here is a 115-residue protein sequence, read N- to C-terminus: Large ribosomal subunit protein bL20 (115 aa).

This sequence belongs to the bacterial ribosomal protein bL20 family.

In terms of biological role, binds directly to 23S ribosomal RNA and is necessary for the in vitro assembly process of the 50S ribosomal subunit. It is not involved in the protein synthesizing functions of that subunit. In Microcystis aeruginosa (strain NIES-843 / IAM M-2473), this protein is Large ribosomal subunit protein bL20.